A 164-amino-acid chain; its full sequence is Ribosome maturation factor RimP (164 aa).

The protein belongs to the RimP family.

It localises to the cytoplasm. Required for maturation of 30S ribosomal subunits. This is Ribosome maturation factor RimP from Thermodesulfovibrio yellowstonii (strain ATCC 51303 / DSM 11347 / YP87).